Consider the following 417-residue polypeptide: Multifunctional CCA protein (417 aa).

ATP contacts are provided by Gly8 and Arg11. Residues Gly8 and Arg11 each contribute to the CTP site. Asp21 and Asp23 together coordinate Mg(2+). ATP is bound by residues Arg91, Arg137, and Arg140. The CTP site is built by Arg91, Arg137, and Arg140. Positions 225–326 constitute an HD domain; sequence SGIHTLMTLQ…LNVLKKTDAF (102 aa).

Belongs to the tRNA nucleotidyltransferase/poly(A) polymerase family. Bacterial CCA-adding enzyme type 1 subfamily. In terms of assembly, monomer. Can also form homodimers and oligomers. Mg(2+) serves as cofactor. It depends on Ni(2+) as a cofactor.

The enzyme catalyses a tRNA precursor + 2 CTP + ATP = a tRNA with a 3' CCA end + 3 diphosphate. The catalysed reaction is a tRNA with a 3' CCA end + 2 CTP + ATP = a tRNA with a 3' CCACCA end + 3 diphosphate. In terms of biological role, catalyzes the addition and repair of the essential 3'-terminal CCA sequence in tRNAs without using a nucleic acid template. Adds these three nucleotides in the order of C, C, and A to the tRNA nucleotide-73, using CTP and ATP as substrates and producing inorganic pyrophosphate. tRNA 3'-terminal CCA addition is required both for tRNA processing and repair. Also involved in tRNA surveillance by mediating tandem CCA addition to generate a CCACCA at the 3' terminus of unstable tRNAs. While stable tRNAs receive only 3'-terminal CCA, unstable tRNAs are marked with CCACCA and rapidly degraded. The polypeptide is Multifunctional CCA protein (Neisseria meningitidis serogroup C / serotype 2a (strain ATCC 700532 / DSM 15464 / FAM18)).